The sequence spans 67 residues: Small ribosomal subunit protein bS21 (67 aa).

This sequence belongs to the bacterial ribosomal protein bS21 family.

The protein is Small ribosomal subunit protein bS21 of Nitratidesulfovibrio vulgaris (strain DSM 19637 / Miyazaki F) (Desulfovibrio vulgaris).